A 1148-amino-acid chain; its full sequence is Envelopment polyprotein (1148 aa).

The first 23 residues, 1-23, serve as a signal peptide directing secretion; sequence MGELSPVCLCLLLQGLLLCNTGA. Residues 24-496 lie on the Lumenal side of the membrane; that stretch reads ARNLNELKME…PGLHGWATML (473 aa). Cystine bridges form between Cys34–Cys159, Cys68–Cys165, Cys117–Cys136, Cys141–Cys146, Cys183–Cys193, and Cys218–Cys257. Residue Asn142 is glycosylated (N-linked (GlcNAc...) asparagine; by host). Residue Asn357 is glycosylated (N-linked (GlcNAc...) asparagine; by host). Disulfide bonds link Cys386–Cys445, Cys390–Cys399, Cys415–Cys434, and Cys462–Cys485. N-linked (GlcNAc...) asparagine; by host glycosylation occurs at Asn409. Residues 497 to 517 traverse the membrane as a helical segment; it reads LLLTFCFGWVLIPTITMILLK. Residues 518 to 637 lie on the Cytoplasmic side of the membrane; sequence ILIAFAYLCS…LSLFRYRSRF (120 aa). Residues 526–543 are binding to the ribonucleoprotein; sequence CSKYNTDSKFRILIEKVK. CCHC-type zinc fingers lie at residues 555–575 and 580–601; these read CEVCQYECETAKELESHRKSC and CPYCLNPSEATTSALQAHFKVC. Binding to the ribonucleoprotein regions lie at residues 598–615, 602–613, and 621–635; these read FKVCKLTSRFQENLRKSL, KLTSRFQENLRK, and MQGCYRTLSLFRYRS. In terms of domain architecture, ITAM spans 621 to 644; the sequence is MQGCYRTLSLFRYRSRFFVGLVWC. The short motif at 625–628 is the YxxL element; sequence YRTL. A helical membrane pass occupies residues 638-658; the sequence is FVGLVWCVLLVLELIVWAASA. At 659–1115 the chain is on the lumenal side; that stretch reads ETQNLNAGWT…WILGVLNGNW (457 aa). 8 cysteine pairs are disulfide-bonded: Cys745-Cys780, Cys749-Cys787, Cys761-Cys894, Cys775-Cys905, Cys790-Cys913, Cys816-Cys825, Cys833-Cys842, and Cys873-Cys877. Residues 767–787 form a fusion loop region; sequence YEYETGWGCNPPDCPGVGTGC. Asn937 carries an N-linked (GlcNAc...) asparagine; by host glycan. Disulfide bonds link Cys979–Cys1009, Cys1002–Cys1054, Cys1019–Cys1024, Cys1055–Cys1060, and Cys1094–Cys1098. A helical transmembrane segment spans residues 1116 to 1136; it reads MVVAVLVVLLILSILLFTLCC. Binding to the ribonucleoprotein regions lie at residues 1131-1143 and 1131-1148; these read LFTLCCPRRPSYR and LFTLCCPRRPSYRKEHKP. Residues 1137–1148 lie on the Cytoplasmic side of the membrane; it reads PRRPSYRKEHKP.

The protein belongs to the hantavirus envelope glycoprotein family. As to quaternary structure, homodimer. Homotetramer; forms heterotetrameric Gn-Gc spikes in the pre-fusion conformation. Interacts (via C-terminus) with the nucleoprotein. Interacts with host TUFM; this interaction contributes to the virus-induced degradation of mitochondria by autophagy, which leads to degradation of host MAVS and inhibition of type I interferon (IFN) responses. Interacts with host MAP1LC3B; this interaction contributes to the virus-induced degradation of mitochondria by autophagy, which leads to degradation of host MAVS and inhibition of type I interferon (IFN) responses. In terms of assembly, homodimer. Homotetramer; forms heterotetrameric Gn-Gc spikes in the pre-fusion conformation. Homotrimer; forms homotrimer in the post-fusion conformation at acidic pH. Interacts (via C-terminus) with the nucleoprotein. In terms of processing, envelope polyprotein precursor is quickly cleaved in vivo just after synthesis, presumably by host signal peptidase.

The protein resides in the virion membrane. It is found in the host cell surface. Its subcellular location is the host Golgi apparatus membrane. The protein localises to the host endoplasmic reticulum membrane. It localises to the host mitochondrion. Functionally, forms homotetramers with glycoprotein C at the surface of the virion. Attaches the virion to host cell receptors including integrin ITGAV/ITGB3. This attachment induces virion internalization predominantly through clathrin-dependent endocytosis. Mediates the assembly and budding of infectious virus particles through its interaction with the nucleocapsid protein and the viral genome. May dysregulate normal immune and endothelial cell responses through an ITAM motif. Translocates to mitochondria, binds to host TUFM and recruits MAP1LC3B. These interactions induce mitochondrial autophagy and therefore destruction of host MAVS leading to inhibition of type I interferon (IFN) responses. Concomitant breakdown of glycoprotein N is apparently prevented by the nucleoprotein that may inhibit Gn-stimulated autophagosome-lysosome fusion. Interacts with the viral genomic RNA. In terms of biological role, forms homotetramers with glycoprotein N at the surface of the virion. Attaches the virion to host cell receptors including integrin ITGAV/ITGB3. This attachment induces virion internalization predominantly through clathrin-dependent endocytosis. Class II fusion protein that promotes fusion of viral membrane with host endosomal membrane after endocytosis of the virion. The polypeptide is Envelopment polyprotein (GP) (Homo sapiens (Human)).